The following is a 186-amino-acid chain: Ribosome-recycling factor (186 aa).

It belongs to the RRF family.

Its subcellular location is the cytoplasm. Functionally, responsible for the release of ribosomes from messenger RNA at the termination of protein biosynthesis. May increase the efficiency of translation by recycling ribosomes from one round of translation to another. The sequence is that of Ribosome-recycling factor from Bartonella quintana (strain Toulouse) (Rochalimaea quintana).